A 133-amino-acid polypeptide reads, in one-letter code: Small ribosomal subunit protein uS11 (133 aa).

It belongs to the universal ribosomal protein uS11 family. Part of the 30S ribosomal subunit. Interacts with proteins S7 and S18. Binds to IF-3.

Its function is as follows. Located on the platform of the 30S subunit, it bridges several disparate RNA helices of the 16S rRNA. Forms part of the Shine-Dalgarno cleft in the 70S ribosome. The chain is Small ribosomal subunit protein uS11 from Shouchella clausii (strain KSM-K16) (Alkalihalobacillus clausii).